Consider the following 205-residue polypeptide: 3-isopropylmalate dehydratase small subunit (205 aa).

Belongs to the LeuD family. LeuD type 1 subfamily. In terms of assembly, heterodimer of LeuC and LeuD.

The catalysed reaction is (2R,3S)-3-isopropylmalate = (2S)-2-isopropylmalate. It participates in amino-acid biosynthesis; L-leucine biosynthesis; L-leucine from 3-methyl-2-oxobutanoate: step 2/4. Functionally, catalyzes the isomerization between 2-isopropylmalate and 3-isopropylmalate, via the formation of 2-isopropylmaleate. This Christiangramia forsetii (strain DSM 17595 / CGMCC 1.15422 / KT0803) (Gramella forsetii) protein is 3-isopropylmalate dehydratase small subunit.